Here is a 375-residue protein sequence, read N- to C-terminus: tRNA-specific 2-thiouridylase MnmA (375 aa).

ATP-binding positions include 9 to 16 (AMSGGVDS) and Leu-35. Cys-105 acts as the Nucleophile in catalysis. Cys-105 and Cys-201 form a disulfide bridge. Gly-129 contacts ATP. The interaction with tRNA stretch occupies residues 151 to 153 (KNQ). The active-site Cysteine persulfide intermediate is the Cys-201. Residues 307–308 (RY) form an interaction with tRNA region.

It belongs to the MnmA/TRMU family.

The protein resides in the cytoplasm. The catalysed reaction is S-sulfanyl-L-cysteinyl-[protein] + uridine(34) in tRNA + AH2 + ATP = 2-thiouridine(34) in tRNA + L-cysteinyl-[protein] + A + AMP + diphosphate + H(+). In terms of biological role, catalyzes the 2-thiolation of uridine at the wobble position (U34) of tRNA, leading to the formation of s(2)U34. The chain is tRNA-specific 2-thiouridylase MnmA from Leptospira interrogans serogroup Icterohaemorrhagiae serovar Lai (strain 56601).